The primary structure comprises 312 residues: Ribose-phosphate pyrophosphokinase (312 aa).

ATP-binding positions include 34–36 (DQE) and 93–94 (RQ). His-127 and Asp-167 together coordinate Mg(2+). Lys-191 is an active-site residue. Residues Arg-193, Asp-217, and 221–225 (DSGGT) each bind D-ribose 5-phosphate.

Belongs to the ribose-phosphate pyrophosphokinase family. Class I subfamily. Homohexamer. Requires Mg(2+) as cofactor.

Its subcellular location is the cytoplasm. It carries out the reaction D-ribose 5-phosphate + ATP = 5-phospho-alpha-D-ribose 1-diphosphate + AMP + H(+). It functions in the pathway metabolic intermediate biosynthesis; 5-phospho-alpha-D-ribose 1-diphosphate biosynthesis; 5-phospho-alpha-D-ribose 1-diphosphate from D-ribose 5-phosphate (route I): step 1/1. Functionally, involved in the biosynthesis of the central metabolite phospho-alpha-D-ribosyl-1-pyrophosphate (PRPP) via the transfer of pyrophosphoryl group from ATP to 1-hydroxyl of ribose-5-phosphate (Rib-5-P). This Hyphomonas neptunium (strain ATCC 15444) protein is Ribose-phosphate pyrophosphokinase.